We begin with the raw amino-acid sequence, 544 residues long: Tyrosine-protein kinase Yes (544 aa).

Residue G2 is the site of N-myristoyl glycine attachment. An SH3 domain is found at 92-153 (GGVTFFVALY…PSNYVAPADS (62 aa)). The SH2 domain maps to 159 to 256 (WYFGKLSRKD…GLCYKLTTVC (98 aa)). In terms of domain architecture, Protein kinase spans 278 to 531 (LRLDVRLGQG…YIQSFLEDYF (254 aa)). ATP-binding positions include 284–292 (LGQGCFGEV) and K306. Residue D397 is the Proton acceptor of the active site. Residue Y427 is modified to Phosphotyrosine; by autocatalysis.

It belongs to the protein kinase superfamily. Tyr protein kinase family. SRC subfamily.

The enzyme catalyses L-tyrosyl-[protein] + ATP = O-phospho-L-tyrosyl-[protein] + ADP + H(+). The sequence is that of Tyrosine-protein kinase Yes (yes) from Xiphophorus hellerii (Green swordtail).